The chain runs to 357 residues: MKKYLLLALLPFLYACSNSSNQGINYDEAFAKDTQGLDILTGQFSHNIDRIWGVNELLVASRKDYVKYTDSFYTRSHVSFDEGNIVIETQQDLNRLHNAIVHTLLMGADAKGIDLFASGDVPISSRPFLLGQVVDHQGQHIANQVIASNFATYLIQNKLQTRRLQNGHTVQFVSVPMIANHVEVRARKYLPLIRKAAQRYGIDESLILGIMQTESSFNPYAISYANAIGLMQVVPHTAGRDVFAMKGKGGQPSTRYLYDPANNIDAGVSYLWILQNQYLDGITNPTSKRFAMISAYNSGAGAVLRVFDNDKDTAIYKINQMYPEQVYRILTTVHPSSQARNYLLKVDKAQKKFRVRR.

An N-terminal signal peptide occupies residues 1 to 15; it reads MKKYLLLALLPFLYA. A lipid anchor (N-palmitoyl cysteine) is attached at C16. Residue C16 is the site of S-diacylglycerol cysteine attachment.

This sequence belongs to the transglycosylase Slt family.

The protein resides in the cell outer membrane. The enzyme catalyses Exolytic cleavage of the (1-&gt;4)-beta-glycosidic linkage between N-acetylmuramic acid (MurNAc) and N-acetylglucosamine (GlcNAc) residues in peptidoglycan, from either the reducing or the non-reducing ends of the peptidoglycan chains, with concomitant formation of a 1,6-anhydrobond in the MurNAc residue.. Its function is as follows. Murein-degrading enzyme. May play a role in recycling of muropeptides during cell elongation and/or cell division. The polypeptide is Membrane-bound lytic murein transglycosylase C (Haemophilus influenzae (strain ATCC 51907 / DSM 11121 / KW20 / Rd)).